The following is a 919-amino-acid chain: Probable dipeptidyl-aminopeptidase B (919 aa).

Basic and acidic residues predominate over residues 1–10 (MRRSDGHEET). Positions 1–53 (MRRSDGHEETSEFLPMTHSRSVSAASQTSTDSSLSTESLFPREQKPFPNAMGG) are disordered. The Cytoplasmic segment spans residues 1–92 (MRRSDGHEET…AATGGGRARR (92 aa)). Low complexity predominate over residues 21-38 (SVSAASQTSTDSSLSTES). Residues 93–113 (IFWILVLLCLGGWLLAFVLFL) traverse the membrane as a helical; Signal-anchor for type II membrane protein segment. The Vacuolar segment spans residues 114-919 (TGGRANYQTA…MKRSLRLLSP (806 aa)). 3 N-linked (GlcNAc...) asparagine glycosylation sites follow: asparagine 200, asparagine 352, and asparagine 643. Serine 757 serves as the catalytic Charge relay system. Asparagine 811 carries N-linked (GlcNAc...) asparagine glycosylation. Residues aspartate 834 and histidine 867 each act as charge relay system in the active site.

It belongs to the peptidase S9B family.

It is found in the vacuole membrane. The catalysed reaction is Release of an N-terminal dipeptide, Xaa-Yaa-|-Zaa-, from a polypeptide, preferentially when Yaa is Pro, provided Zaa is neither Pro nor hydroxyproline.. Its function is as follows. Type IV dipeptidyl-peptidase which removes N-terminal dipeptides sequentially from polypeptides having unsubstituted N-termini provided that the penultimate residue is proline. This is Probable dipeptidyl-aminopeptidase B (dapB) from Aspergillus fumigatus (strain CBS 144.89 / FGSC A1163 / CEA10) (Neosartorya fumigata).